The chain runs to 356 residues: Probable arabinogalactan endo-beta-1,4-galactanase A (356 aa).

Residues methionine 1–alanine 21 form the signal peptide. An N-linked (GlcNAc...) asparagine glycan is attached at asparagine 133. Residue glutamate 157 is the Proton donor of the active site. Glutamate 268 functions as the Nucleophile in the catalytic mechanism.

This sequence belongs to the glycosyl hydrolase 53 family.

It is found in the secreted. It catalyses the reaction The enzyme specifically hydrolyzes (1-&gt;4)-beta-D-galactosidic linkages in type I arabinogalactans.. In terms of biological role, endogalactanase involved in the degradation of plant cell wall polysaccharides, and more particularly of hairy regions of pectin. The protein is Probable arabinogalactan endo-beta-1,4-galactanase A (galA) of Neosartorya fischeri (strain ATCC 1020 / DSM 3700 / CBS 544.65 / FGSC A1164 / JCM 1740 / NRRL 181 / WB 181) (Aspergillus fischerianus).